We begin with the raw amino-acid sequence, 337 residues long: Tryptophan--tRNA ligase 2 (337 aa).

ATP-binding positions include 13-15 (QPT) and 22-23 (GN). The 'HIGH' region signature appears at 14-23 (PTAGSFHLGN). Aspartate 139 provides a ligand contact to L-tryptophan. ATP-binding positions include 151 to 153 (GED), isoleucine 190, and 199 to 203 (KMSKS). The 'KMSKS' region motif lies at 199 to 203 (KMSKS).

This sequence belongs to the class-I aminoacyl-tRNA synthetase family. In terms of assembly, homodimer.

The protein resides in the cytoplasm. The enzyme catalyses tRNA(Trp) + L-tryptophan + ATP = L-tryptophyl-tRNA(Trp) + AMP + diphosphate + H(+). In terms of biological role, catalyzes the attachment of tryptophan to tRNA(Trp). The protein is Tryptophan--tRNA ligase 2 of Streptomyces avermitilis (strain ATCC 31267 / DSM 46492 / JCM 5070 / NBRC 14893 / NCIMB 12804 / NRRL 8165 / MA-4680).